The primary structure comprises 346 residues: D-fructose 1,6-bisphosphatase class 2/sedoheptulose 1,7-bisphosphatase 1 (346 aa).

4 residues coordinate Mn(2+): Asp-33, Glu-57, Asp-97, and Glu-100. Substrate-binding positions include 100–102, Tyr-131, 176–178, and 198–200; these read EGT, RAR, and DGD. Mn(2+) is bound at residue Glu-225.

This sequence belongs to the FBPase class 2 family. As to quaternary structure, homotetramer. Requires Mn(2+) as cofactor.

It carries out the reaction beta-D-fructose 1,6-bisphosphate + H2O = beta-D-fructose 6-phosphate + phosphate. It catalyses the reaction D-sedoheptulose 1,7-bisphosphate + H2O = D-sedoheptulose 7-phosphate + phosphate. It participates in carbohydrate biosynthesis; Calvin cycle. Its function is as follows. Catalyzes the hydrolysis of fructose 1,6-bisphosphate (Fru 1,6-P2) and sedoheptulose 1,7-bisphosphate (Sed 1,7-P2) to fructose 6-phosphate and sedoheptulose 7-phosphate, respectively. This is D-fructose 1,6-bisphosphatase class 2/sedoheptulose 1,7-bisphosphatase 1 from Acaryochloris marina (strain MBIC 11017).